A 359-amino-acid polypeptide reads, in one-letter code: 3-dehydroquinate synthase (359 aa).

NAD(+) contacts are provided by residues 71–76 (DGEQYK), 104–108 (GVVGD), 128–129 (TT), K141, K150, and 168–171 (TLNT). Positions 183, 247, and 264 each coordinate Zn(2+).

The protein belongs to the sugar phosphate cyclases superfamily. Dehydroquinate synthase family. Requires Co(2+) as cofactor. Zn(2+) serves as cofactor. The cofactor is NAD(+).

It localises to the cytoplasm. The enzyme catalyses 7-phospho-2-dehydro-3-deoxy-D-arabino-heptonate = 3-dehydroquinate + phosphate. It participates in metabolic intermediate biosynthesis; chorismate biosynthesis; chorismate from D-erythrose 4-phosphate and phosphoenolpyruvate: step 2/7. Catalyzes the conversion of 3-deoxy-D-arabino-heptulosonate 7-phosphate (DAHP) to dehydroquinate (DHQ). The protein is 3-dehydroquinate synthase of Coxiella burnetii (strain Dugway 5J108-111).